The following is a 143-amino-acid chain: Large ribosomal subunit protein uL15 (143 aa).

The disordered stretch occupies residues Met-1 to Arg-59. A compositionally biased stretch (gly residues) spans Arg-21 to Ala-31.

The protein belongs to the universal ribosomal protein uL15 family. As to quaternary structure, part of the 50S ribosomal subunit.

In terms of biological role, binds to the 23S rRNA. The polypeptide is Large ribosomal subunit protein uL15 (Albidiferax ferrireducens (strain ATCC BAA-621 / DSM 15236 / T118) (Rhodoferax ferrireducens)).